The chain runs to 24 residues: Iron-regulated 31 kDa protein (24 aa).

Its subcellular location is the periplasm. Functionally, may be involved in iron uptake. This Haemophilus influenzae protein is Iron-regulated 31 kDa protein.